A 490-amino-acid polypeptide reads, in one-letter code: Transmembrane protein 185-like (490 aa).

The span at 1 to 31 (MIENENTSLLSTSSSSTSSSPNNANSPSSLN) shows a compositional bias: low complexity. Disordered regions lie at residues 1–151 (MIEN…SKYK) and 455–490 (NMIN…ISNL). Polar residues predominate over residues 47-59 (TSGNNSPSAQITK). 2 stretches are compositionally biased toward low complexity: residues 66-80 (SNNS…NSRS) and 89-108 (NNNN…NNIN). Positions 109–125 (KHNSIVYNKSNNKLNSI) are enriched in polar residues. Positions 133 to 145 (QGGGGGNGNGNGN) are enriched in gly residues. The segment covering 463-472 (SESESDDETE) has biased composition (acidic residues).

This sequence belongs to the TMEM185 family.

The polypeptide is Transmembrane protein 185-like (Dictyostelium discoideum (Social amoeba)).